Reading from the N-terminus, the 146-residue chain is uncharacterized protein (146 aa).

The 137-residue stretch at 1-137 folds into the HTH marR-type domain; that stretch reads MLSQEFFNSF…TINVMNQIHE (137 aa).

This is an uncharacterized protein from Staphylococcus aureus (strain N315).